Here is a 253-residue protein sequence, read N- to C-terminus: uncharacterized protein (253 aa).

The residue at position 2 (Ala2) is an N-acetylalanine.

This sequence belongs to the NAD(P)-dependent epimerase/dehydratase family. As to quaternary structure, homodimer.

This is an uncharacterized protein from Arabidopsis thaliana (Mouse-ear cress).